We begin with the raw amino-acid sequence, 225 residues long: Probable septum site-determining protein MinC (225 aa).

Positions 87–112 (PTHMASPQGNSSKTRSSDTQPKPKTP) are disordered. Positions 91-108 (ASPQGNSSKTRSSDTQPK) are enriched in polar residues.

It belongs to the MinC family. In terms of assembly, interacts with MinD and FtsZ.

Functionally, cell division inhibitor that blocks the formation of polar Z ring septums. Rapidly oscillates between the poles of the cell to destabilize FtsZ filaments that have formed before they mature into polar Z rings. Prevents FtsZ polymerization. This Prochlorococcus marinus (strain MIT 9313) protein is Probable septum site-determining protein MinC.